A 205-amino-acid chain; its full sequence is MSFTGTLDKCNVCDKTVYVVDMLSIEGMPYHKSCFRCTHCKGTLQMSNYSSMDGVLYCKTHFEQLFKESGNFSKNFQPGKTEKPELTRTPSKISSIFCGTQDKCAACEKTVYPLEKIQMEGECFHKTCFRCAHGGCTLTHSSYASLDSVLYCRHHFNQLFMEKGNYAHVLQAANHRRTASGNTLPPEPTEDVAVEAKEENGVSES.

LIM zinc-binding domains lie at 8 to 68 (DKCN…LFKE) and 102 to 162 (DKCA…LFME). Positions 177–205 (RTASGNTLPPEPTEDVAVEAKEENGVSES) are disordered. Residues 194 to 205 (VEAKEENGVSES) are compositionally biased toward basic and acidic residues.

As to quaternary structure, interacts with F-actin. Predominantly expressed in flowers and in pollen grains. Detected in vasculature and roots.

Its subcellular location is the cytoplasm. The protein localises to the cytoskeleton. In terms of biological role, binds to actin filaments and promotes cross-linking into thick bundles. Has an actin-stabilizing activity. The actin regulatory activities are inhibited by pH &gt; 6.8 but are [Ca(2+)] independent. This chain is LIM domain-containing protein PLIM2b, found in Arabidopsis thaliana (Mouse-ear cress).